We begin with the raw amino-acid sequence, 87 residues long: Large ribosomal subunit protein bL27 (87 aa).

The disordered stretch occupies residues 1–25 (MAHKKGASSSRNGRDSNAQRLGVKR). Residues 7–19 (ASSSRNGRDSNAQ) are compositionally biased toward polar residues.

The protein belongs to the bacterial ribosomal protein bL27 family.

The chain is Large ribosomal subunit protein bL27 from Rhodococcus opacus (strain B4).